We begin with the raw amino-acid sequence, 204 residues long: Translation initiation factor 2 subunit beta (204 aa).

The TRAM domain maps to 146 to 204 (NLEEGQVLDVEIQSLSKRGDGVVKMGRYIMYVSNAKPGQSVKIKISRISGSIVFTERAE).

This sequence belongs to the eIF-2-beta/eIF-5 family. As to quaternary structure, heterotrimer composed of an alpha, a beta and a gamma chain.

Functionally, eIF-2 functions in the early steps of protein synthesis by forming a ternary complex with GTP and initiator tRNA. The chain is Translation initiation factor 2 subunit beta from Methanoregula boonei (strain DSM 21154 / JCM 14090 / 6A8).